A 420-amino-acid polypeptide reads, in one-letter code: Uteroferrin-associated basic protein 2 (420 aa).

The N-terminal stretch at 1–25 (MSHGKMPLVLSLVLILCGLFNSISC) is a signal peptide. Residues Asn-225, Asn-271, and Asn-343 are each glycosylated (N-linked (GlcNAc...) asparagine).

Belongs to the serpin family. UTMP subfamily.

It is found in the secreted. The protein resides in the extracellular space. In Sus scrofa (Pig), this protein is Uteroferrin-associated basic protein 2.